The primary structure comprises 457 residues: tRNA-2-methylthio-N(6)-dimethylallyladenosine synthase (457 aa).

The MTTase N-terminal domain occupies 3–120 (KKVYVKTFGC…LPQMIDARRA (118 aa)). Positions 12, 49, 83, 157, 161, and 164 each coordinate [4Fe-4S] cluster. The region spanning 143-377 (RVEGPSAFVS…QATIEENVAR (235 aa)) is the Radical SAM core domain. One can recognise a TRAM domain in the interval 380-447 (QSMVGKVERI…PHSLRGELLL (68 aa)).

Belongs to the methylthiotransferase family. MiaB subfamily. As to quaternary structure, monomer. [4Fe-4S] cluster serves as cofactor.

The protein localises to the cytoplasm. The catalysed reaction is N(6)-dimethylallyladenosine(37) in tRNA + (sulfur carrier)-SH + AH2 + 2 S-adenosyl-L-methionine = 2-methylsulfanyl-N(6)-dimethylallyladenosine(37) in tRNA + (sulfur carrier)-H + 5'-deoxyadenosine + L-methionine + A + S-adenosyl-L-homocysteine + 2 H(+). Catalyzes the methylthiolation of N6-(dimethylallyl)adenosine (i(6)A), leading to the formation of 2-methylthio-N6-(dimethylallyl)adenosine (ms(2)i(6)A) at position 37 in tRNAs that read codons beginning with uridine. This chain is tRNA-2-methylthio-N(6)-dimethylallyladenosine synthase, found in Burkholderia vietnamiensis (strain G4 / LMG 22486) (Burkholderia cepacia (strain R1808)).